A 152-amino-acid chain; its full sequence is Transcriptional repressor NrdR (152 aa).

A zinc finger spans residues 3 to 34 (CPYCQHPDSDVIDTRKLHNGETIRRRRKCEAC). The 91-residue stretch at 49–139 (ITVVKKNGER…VYRSFADIGK (91 aa)) folds into the ATP-cone domain.

Belongs to the NrdR family. Zn(2+) is required as a cofactor.

Functionally, negatively regulates transcription of bacterial ribonucleotide reductase nrd genes and operons by binding to NrdR-boxes. This chain is Transcriptional repressor NrdR, found in Roseiflexus sp. (strain RS-1).